Consider the following 372-residue polypeptide: Cytochrome b (372 aa).

The next 4 helical transmembrane spans lie at 29 to 49 (FGSM…ILSW), 73 to 95 (WFIR…LHIL), 108 to 128 (VWYS…LGYV), and 174 to 194 (FFSF…IHLI). Positions 79 and 93 each coordinate heme b. Positions 178 and 192 each coordinate heme b. Residue His-197 coordinates a ubiquinone. Helical transmembrane passes span 220–240 (FSLK…FCIF), 284–301 (LGGV…VFLG), 311–336 (MVKT…IMGG), and 344–363 (DILG…IMLL).

Belongs to the cytochrome b family. In terms of assembly, the main subunits of complex b-c1 are: cytochrome b, cytochrome c1 and the Rieske protein. It depends on heme b as a cofactor.

It localises to the mitochondrion inner membrane. Component of the ubiquinol-cytochrome c reductase complex (complex III or cytochrome b-c1 complex) that is part of the mitochondrial respiratory chain. The b-c1 complex mediates electron transfer from ubiquinol to cytochrome c. Contributes to the generation of a proton gradient across the mitochondrial membrane that is then used for ATP synthesis. The sequence is that of Cytochrome b (mt:Cyt-b) from Leptorhynchoides thecatus (Thorny-headed worm).